The primary structure comprises 266 residues: Streptomycin 3''-kinase (266 aa).

Residue Asp-154 is the Proton acceptor of the active site.

It belongs to the aminoglycoside phosphotransferase family.

The catalysed reaction is streptomycin + ATP = streptomycin 3''-phosphate + ADP + H(+). Its function is as follows. The aminoglycoside phosphotransferases achieve inactivation of their antibiotic substrates by phosphorylation. The chain is Streptomycin 3''-kinase (str) from Klebsiella pneumoniae.